Consider the following 314-residue polypeptide: NF-kappa-B inhibitor alpha (314 aa).

The tract at residues 1 to 40 is disordered; that stretch reads MFQPAGHGQDWAMEGPRDGLKKERLVDDRHDSGLDSMKDE. Residues 15-40 show a composition bias toward basic and acidic residues; sequence GPRDGLKKERLVDDRHDSGLDSMKDE. K21 participates in a covalent cross-link: Glycyl lysine isopeptide (Lys-Gly) (interchain with G-Cter in SUMO); alternate. A Glycyl lysine isopeptide (Lys-Gly) (interchain with G-Cter in ubiquitin); alternate cross-link involves residue K21. Residue K22 forms a Glycyl lysine isopeptide (Lys-Gly) (interchain with G-Cter in ubiquitin) linkage. Positions 30–36 match the Destruction motif motif; it reads HDSGLDS. Phosphoserine; by IKKB is present on S32. S36 carries the post-translational modification Phosphoserine; by IKKA, IKKB, IKKE and TBK1. Y42 carries the post-translational modification Phosphotyrosine. The Nuclear export signal motif lies at 45–54; the sequence is MVKELREIRL. 5 ANK repeats span residues 73-103, 110-139, 143-172, 182-211, and 216-245; these read DGDSFLHLAIIHEEKPLTMEVIGQVKGDLAF, LQQTPLHLAVITNQPGIAEALLKAGCDPEL, RGNTPLHLACEQGCLASVAVLTQTCTPQHL, NGHTCLHLASIHGYLAIVEHLVTLGADVNA, and NGRTALHLAVDLQNPDLVSLLLKCGADVNR. The Nuclear import signal motif lies at 110–120; that stretch reads LQQTPLHLAVI. A (3S)-3-hydroxyasparagine; by HIF1AN mark is found at N210 and N244. A phosphoserine; by CK2 mark is found at S283 and S288. At T291 the chain carries Phosphothreonine; by CK2. At S293 the chain carries Phosphoserine; by CK2. Residue T296 is modified to Phosphothreonine.

It belongs to the NF-kappa-B inhibitor family. In terms of assembly, interacts with RELA; the interaction requires the nuclear import signal. Part of a 70-90 kDa complex at least consisting of CHUK, IKBKB, NFKBIA, RELA, ELP1 and MAP3K14. Interacts with NKIRAS1 and NKIRAS2. Interacts with RWDD3; the interaction enhances sumoylation. Interacts with PRMT2. Interacts with PRKACA in platelets; this interaction is disrupted by thrombin and collagen. Interacts with MEFV. Interacts with DDRGK1; positively regulates NFKBIA phosphorylation and degradation. Interacts with HNRNPA2B1; the interaction may be mediated by the RRM2 domain of HNRNPA2B1, and HNRNPA2B1 may interact simultaneously with FAM76B and either NFKBIA or NFKBIE to form a complex. In terms of processing, phosphorylated at Ser-32 and Ser-36 by IKKA/CHUK and IKKB/IKBKB; disables inhibition of NF-kappa-B DNA-binding activity. Phosphorylation at positions 32 and 36 is prerequisite to recognition by the SCF(FBXW11) and SCF(BTRC) complexes, leading to polyubiquitination and subsequent degradation. Post-translationally, polyubiquitinated at Lys-21 and/or Lys-22 following phosphorylation at Ser-32 and Ser-36. Monoubiquitinated at Lys-21 and/or Lys-22 by UBE2D3. Ubiquitin chain elongation is then performed by CDC34 in cooperation with the SCF(FBXW11) E3 ligase complex, building ubiquitin chains from the UBE2D3-primed NFKBIA-linked ubiquitin. The resulting polyubiquitination leads to protein degradation. Also ubiquitinated by the SCF(BTRC) complex following stimulus-dependent phosphorylation at Ser-32 and Ser-36. Deubiquitinated by USP38, leading to NF-kappa-B inhibition. Sumoylated; sumoylation requires the presence of the nuclear import signal. Sumoylation blocks ubiquitination and proteasome-mediated degradation of the protein thereby increasing the protein stability. In terms of processing, hydroxylated by HIF1AN. In terms of tissue distribution, highly expressed in lymph node, thymus followed by liver, brain, muscle, kidney, gastrointestinal and reproductive tract.

It localises to the cytoplasm. Its subcellular location is the nucleus. In terms of biological role, inhibits the activity of dimeric NF-kappa-B/REL complexes by trapping REL (RELA/p65 and NFKB1/p50) dimers in the cytoplasm by masking their nuclear localization signals. On cellular stimulation by immune and pro-inflammatory responses, becomes phosphorylated promoting ubiquitination and degradation, enabling the dimeric RELA to translocate to the nucleus and activate transcription. The sequence is that of NF-kappa-B inhibitor alpha (Nfkbia) from Mus musculus (Mouse).